A 360-amino-acid polypeptide reads, in one-letter code: 8-hydroxygeraniol dehydrogenase (360 aa).

Cys-50, His-72, Cys-103, Cys-106, Cys-109, Cys-117, and Cys-166 together coordinate Zn(2+).

The protein belongs to the zinc-containing alcohol dehydrogenase family. It depends on Zn(2+) as a cofactor. As to expression, present in seedlings and vascular tissues (at protein level). Restricted to the epidermis.

It carries out the reaction (6E)-8-hydroxygeraniol + 2 NADP(+) = (6E)-8-oxogeranial + 2 NADPH + 2 H(+). Dehydrogenase involved in the biosynthesis of oxogeranial from hydroxygeraniol, a precursor of the terpenoid indole alkaloids such as vinblastine and vincristine. The sequence is that of 8-hydroxygeraniol dehydrogenase (10HGO) from Catharanthus roseus (Madagascar periwinkle).